We begin with the raw amino-acid sequence, 112 residues long: Putative transmembrane protein ORF112 (112 aa).

3 helical membrane passes run 26–46 (FWEV…GILV), 50–70 (ILVT…MYLF), and 80–100 (IFFP…LVGV).

It is found in the host membrane. This chain is Putative transmembrane protein ORF112, found in Acidianus convivator (ABV).